A 340-amino-acid polypeptide reads, in one-letter code: Glyceraldehyde-3-phosphate dehydrogenase (340 aa).

Residues 11-12 (TI) and Gly109 contribute to the NAD(+) site. Residue 138 to 140 (SCN) coordinates D-glyceraldehyde 3-phosphate. Residue Cys139 is the Nucleophile of the active site. An NAD(+)-binding site is contributed by Arg167. D-glyceraldehyde 3-phosphate is bound at residue 193–194 (HA). An NAD(+)-binding site is contributed by Gln300.

This sequence belongs to the glyceraldehyde-3-phosphate dehydrogenase family. As to quaternary structure, homotetramer.

The protein localises to the cytoplasm. The enzyme catalyses D-glyceraldehyde 3-phosphate + phosphate + NADP(+) = (2R)-3-phospho-glyceroyl phosphate + NADPH + H(+). It catalyses the reaction D-glyceraldehyde 3-phosphate + phosphate + NAD(+) = (2R)-3-phospho-glyceroyl phosphate + NADH + H(+). Its pathway is carbohydrate degradation; glycolysis; pyruvate from D-glyceraldehyde 3-phosphate: step 1/5. The polypeptide is Glyceraldehyde-3-phosphate dehydrogenase (Saccharolobus islandicus (strain M.14.25 / Kamchatka #1) (Sulfolobus islandicus)).